The primary structure comprises 406 residues: Tryptophan synthase beta chain (406 aa).

K95 is modified (N6-(pyridoxal phosphate)lysine).

This sequence belongs to the TrpB family. In terms of assembly, tetramer of two alpha and two beta chains. The cofactor is pyridoxal 5'-phosphate.

It catalyses the reaction (1S,2R)-1-C-(indol-3-yl)glycerol 3-phosphate + L-serine = D-glyceraldehyde 3-phosphate + L-tryptophan + H2O. It functions in the pathway amino-acid biosynthesis; L-tryptophan biosynthesis; L-tryptophan from chorismate: step 5/5. The beta subunit is responsible for the synthesis of L-tryptophan from indole and L-serine. This Azotobacter vinelandii (strain DJ / ATCC BAA-1303) protein is Tryptophan synthase beta chain.